The primary structure comprises 280 residues: Phosphatidylglycerol--prolipoprotein diacylglyceryl transferase (280 aa).

3 consecutive transmembrane segments (helical) span residues 15–35, 60–80, and 90–110; these read IFSIPIRWYGLMYFLAFIFAL, FIGLFIGGRIGYIIFYNPVFF, and IWEGGMSFHGGLLGVIIVLLF. A 1,2-diacyl-sn-glycero-3-phospho-(1'-sn-glycerol) is bound at residue Arg138. The next 2 helical transmembrane spans lie at 217–237 and 257–277; these read MPFGFVSSIFLILYGCFRIFL and GQLLSMPMIVLGILIAINIYV.

It belongs to the Lgt family.

It localises to the cell membrane. It carries out the reaction L-cysteinyl-[prolipoprotein] + a 1,2-diacyl-sn-glycero-3-phospho-(1'-sn-glycerol) = an S-1,2-diacyl-sn-glyceryl-L-cysteinyl-[prolipoprotein] + sn-glycerol 1-phosphate + H(+). It functions in the pathway protein modification; lipoprotein biosynthesis (diacylglyceryl transfer). Catalyzes the transfer of the diacylglyceryl group from phosphatidylglycerol to the sulfhydryl group of the N-terminal cysteine of a prolipoprotein, the first step in the formation of mature lipoproteins. This Buchnera aphidicola subsp. Baizongia pistaciae (strain Bp) protein is Phosphatidylglycerol--prolipoprotein diacylglyceryl transferase.